The following is a 234-amino-acid chain: MIIMTILSLLLTNAVTLRRDISILFNRIVIIALIYCILHDTMSLSIISKGVGLHGGLLHITNITQVFQIFIFLISILILQLTSFDPIKKFYIMRHPRFINKWPRAIGYSIPLSTPLPPPLRGGGVDLFILLDACLLWANSGTISRSPDFIITKLYCIFHCSFILLGLGVGGLLYGSSTTSLDGLYIINSIQSHVNYSIINPLYRHFNKIQIKMLNNKFLRLSMGAILAHANYDT.

4 helical membrane-spanning segments follow: residues 28 to 48 (IVIIALIYCILHDTMSLSIIS), 67 to 87 (FQIFIFLISILILQLTSFDPI), 123 to 143 (GGVDLFILLDACLLWANSGTI), and 154 to 174 (LYCIFHCSFILLGLGVGGLLY).

The protein belongs to the complex I subunit 2 family.

It localises to the mitochondrion membrane. This is an uncharacterized protein from Neurospora crassa (strain ATCC 24698 / 74-OR23-1A / CBS 708.71 / DSM 1257 / FGSC 987).